A 462-amino-acid chain; its full sequence is Siroheme synthase (462 aa).

The tract at residues 1–203 is precorrin-2 dehydrogenase /sirohydrochlorin ferrochelatase; sequence MEYLPLFANL…GKWEHAEKEI (203 aa). NAD(+)-binding positions include 22-23 and 43-44; these read NV and DD. At serine 128 the chain carries Phosphoserine. Positions 215-462 are uroporphyrinogen-III C-methyltransferase; sequence GNVALVGAGP…NWFGKIIKEQ (248 aa). Proline 224 provides a ligand contact to S-adenosyl-L-methionine. The Proton acceptor role is filled by aspartate 247. Lysine 269 acts as the Proton donor in catalysis. S-adenosyl-L-methionine contacts are provided by residues 300–302, isoleucine 305, 330–331, methionine 383, and glycine 412; these read GGD and TA.

The protein in the N-terminal section; belongs to the precorrin-2 dehydrogenase / sirohydrochlorin ferrochelatase family. It in the C-terminal section; belongs to the precorrin methyltransferase family.

The enzyme catalyses uroporphyrinogen III + 2 S-adenosyl-L-methionine = precorrin-2 + 2 S-adenosyl-L-homocysteine + H(+). The catalysed reaction is precorrin-2 + NAD(+) = sirohydrochlorin + NADH + 2 H(+). It catalyses the reaction siroheme + 2 H(+) = sirohydrochlorin + Fe(2+). Its pathway is cofactor biosynthesis; adenosylcobalamin biosynthesis; precorrin-2 from uroporphyrinogen III: step 1/1. The protein operates within cofactor biosynthesis; adenosylcobalamin biosynthesis; sirohydrochlorin from precorrin-2: step 1/1. It functions in the pathway porphyrin-containing compound metabolism; siroheme biosynthesis; precorrin-2 from uroporphyrinogen III: step 1/1. It participates in porphyrin-containing compound metabolism; siroheme biosynthesis; siroheme from sirohydrochlorin: step 1/1. Its pathway is porphyrin-containing compound metabolism; siroheme biosynthesis; sirohydrochlorin from precorrin-2: step 1/1. Functionally, multifunctional enzyme that catalyzes the SAM-dependent methylations of uroporphyrinogen III at position C-2 and C-7 to form precorrin-2 via precorrin-1. Then it catalyzes the NAD-dependent ring dehydrogenation of precorrin-2 to yield sirohydrochlorin. Finally, it catalyzes the ferrochelation of sirohydrochlorin to yield siroheme. This chain is Siroheme synthase, found in Baumannia cicadellinicola subsp. Homalodisca coagulata.